The primary structure comprises 220 residues: UPF0319 protein YccT (220 aa).

The first 20 residues, Met-1–Ala-20, serve as a signal peptide directing secretion.

This sequence belongs to the UPF0319 family.

This Salmonella choleraesuis (strain SC-B67) protein is UPF0319 protein YccT.